We begin with the raw amino-acid sequence, 310 residues long: Polyprenyl transferase ntnF (310 aa).

8 consecutive transmembrane segments (helical) span residues 30 to 50, 63 to 83, 110 to 130, 154 to 174, 185 to 205, 230 to 250, 255 to 275, and 286 to 306; these read HTPEGLSTASIGWLALFFYAI, FLGIFACYQITHGVFCMWNDI, AMVAFIIGLALSLGVTYAMLG, IWAPQAVLGLTMAACVLPPWV, LPASLFGAIFSWLVYLDLIYA, ACLTVLGALQIAFFAVAAFEA, FLWVFGIAVWAISVPWSILSL, and IFLVNAILGIYLAAVSGTDVW.

It belongs to the UbiA prenyltransferase family. Mg(2+) serves as cofactor.

It localises to the membrane. It functions in the pathway secondary metabolite biosynthesis; terpenoid biosynthesis. Functionally, olyprenyl transferase; part of the gene cluster that mediates the biosynthesis of the meroterpenoids nectripenoids A and B, as well as cochliquninone D and isocochliquninone E. The pathway probably begins with the HR-PKS ntnH that catalyzes two chain-extension steps to form a reduced triketide, which then primes the SAT domain in the NR-PKS ntnG to initiate three more cycles of extension to give a linear hexaketide corresponding to the polyketide part of nectripenoids. The FAD-dependent monooxygenase ntnJ then performs an oxidative decarboxylation at C11 of the ntnH/ntnG product, via an electrophilic aromatic hydroxylation with concomitant ipso-decarboxylation. The membrane-bound polyprenyl transferase ntnF then introduces a farnesyl group before the FAD-dependent monooxygenase ntnK functions as the first epoxidase on terminal C12'-C13' olefin, followed by a second epoxidation on C7'-C8' catalyzed by ntnA. The terpene cyclase/mutase ntnI then initiates the sequential tricyclic ring formation through protonation of the terminal epoxide and catalyzes the regioselective and stereoselective 6/6/6-tricyclic ring formation. The cytochrome P450 monooxygenase ntnM may then hydroxylate C1'. The sequence is that of Polyprenyl transferase ntnF from Nectria sp.